A 381-amino-acid polypeptide reads, in one-letter code: E3 ubiquitin-protein ligase KCMF1 (381 aa).

An N-acetylserine modification is found at S2. S2 carries the phosphoserine modification. A ZZ-type zinc finger spans residues H4–D60. C9, C12, C24, C27, C33, C36, H46, and H50 together coordinate Zn(2+). The C2H2-type zinc-finger motif lies at F78–H101. Residues M154–R193 are disordered. 3 positions are modified to phosphoserine: S169, S189, and S212. Positions S175 to S191 are enriched in low complexity. Residues S225–R257 are a coiled coil. A disordered region spans residues T294–A314. Positions N297–A314 are enriched in basic and acidic residues. Phosphoserine occurs at positions 335 and 336.

The protein belongs to the KCMF1 family. Component of the SIFI complex, composed of KCMF1, UBR4 and calmodulin (CALM1, CALM2 or CALM3). In terms of tissue distribution, spleen, small intestine, ovary, peripheral blood, lung, kidney and pancreas. Expressed at low levels in the thymus, prostate, testis, colon, heart, brain, placenta and liver.

It localises to the cytoplasm. The protein resides in the late endosome. Its subcellular location is the lysosome. The enzyme catalyses S-ubiquitinyl-[E2 ubiquitin-conjugating enzyme]-L-cysteine + [acceptor protein]-L-lysine = [E2 ubiquitin-conjugating enzyme]-L-cysteine + N(6)-ubiquitinyl-[acceptor protein]-L-lysine.. Its pathway is protein modification; protein ubiquitination. In terms of biological role, E3 ubiquitin-protein ligase which accepts ubiquitin from an E2 ubiquitin-conjugating enzyme and then transfers it to targeted substrates, promoting their degradation by the proteasome. Together with UBR4, component of the N-end rule pathway: ubiquitinates proteins bearing specific N-terminal residues that are destabilizing according to the N-end rule, leading to their degradation. Does not ubiquitinate proteins that are acetylated at the N-terminus. Together with UBR4, part of a protein quality control pathway that catalyzes ubiquitination and degradation of proteins that have been oxidized in response to reactive oxygen species (ROS): recognizes proteins with an Arg-CysO3(H) degron at the N-terminus, and mediates assembly of heterotypic 'Lys-63'-/'Lys-27'-linked branched ubiquitin chains on oxidized proteins, leading to their degradation by autophagy. Catalytic component of the SIFI complex, a multiprotein complex required to inhibit the mitochondrial stress response after a specific stress event has been resolved: ubiquitinates and degrades (1) components of the HRI-mediated signaling of the integrated stress response, such as DELE1 and EIF2AK1/HRI, as well as (2) unimported mitochondrial precursors. Within the SIFI complex, UBR4 initiates ubiquitin chain that are further elongated or branched by KCMF1. This Homo sapiens (Human) protein is E3 ubiquitin-protein ligase KCMF1.